Reading from the N-terminus, the 229-residue chain is Peptidyl-prolyl cis-trans isomerase FKBP17-1, chloroplastic (229 aa).

Residues M1–T63 constitute a chloroplast transit peptide. The PPIase FKBP-type domain maps to G105 to R225.

This sequence belongs to the FKBP-type PPIase family.

It localises to the plastid. The protein resides in the chloroplast thylakoid lumen. It carries out the reaction [protein]-peptidylproline (omega=180) = [protein]-peptidylproline (omega=0). Its function is as follows. PPIases accelerate the folding of proteins. It catalyzes the cis-trans isomerization of proline imidic peptide bonds in oligopeptides. The sequence is that of Peptidyl-prolyl cis-trans isomerase FKBP17-1, chloroplastic (FKBP17-1) from Arabidopsis thaliana (Mouse-ear cress).